The sequence spans 315 residues: Tyrosine recombinase XerC (315 aa).

The region spanning 14 to 105 is the Core-binding (CB) domain; it reads PDLLNERQSW…GLRSLLHHLQ (92 aa). A Tyr recombinase domain is found at 126-309; it reads SLPKPLTDRQ…DTARLLEIYD (184 aa). Residues Arg-169, Lys-193, His-261, Arg-264, and His-287 contribute to the active site. The O-(3'-phospho-DNA)-tyrosine intermediate role is filled by Tyr-296.

It belongs to the 'phage' integrase family. XerC subfamily. In terms of assembly, forms a cyclic heterotetrameric complex composed of two molecules of XerC and two molecules of XerD.

The protein localises to the cytoplasm. Functionally, site-specific tyrosine recombinase, which acts by catalyzing the cutting and rejoining of the recombining DNA molecules. The XerC-XerD complex is essential to convert dimers of the bacterial chromosome into monomers to permit their segregation at cell division. It also contributes to the segregational stability of plasmids. In Agrobacterium fabrum (strain C58 / ATCC 33970) (Agrobacterium tumefaciens (strain C58)), this protein is Tyrosine recombinase XerC.